Here is a 397-residue protein sequence, read N- to C-terminus: Phosphoglycerate kinase (397 aa).

Substrate is bound by residues 21 to 23, Arg37, 60 to 63, Arg119, and Arg152; these read DFN and HLGR. ATP-binding positions include Lys203, Gly294, Glu325, and 354–357; that span reads GGDS.

Belongs to the phosphoglycerate kinase family. Monomer.

The protein resides in the cytoplasm. It catalyses the reaction (2R)-3-phosphoglycerate + ATP = (2R)-3-phospho-glyceroyl phosphate + ADP. Its pathway is carbohydrate degradation; glycolysis; pyruvate from D-glyceraldehyde 3-phosphate: step 2/5. The sequence is that of Phosphoglycerate kinase from Chlorobium phaeobacteroides (strain DSM 266 / SMG 266 / 2430).